Reading from the N-terminus, the 368-residue chain is tRNA-specific 2-thiouridylase MnmA (368 aa).

ATP is bound by residues 11 to 18 and Met-37; that span reads GMSGGVDS. The tract at residues 97 to 99 is interaction with target base in tRNA; it reads NPD. The active-site Nucleophile is Cys-102. Cys-102 and Cys-199 form a disulfide bridge. Gly-127 contacts ATP. Residues 149 to 151 are interaction with tRNA; sequence KDQ. Cys-199 (cysteine persulfide intermediate) is an active-site residue. An interaction with tRNA region spans residues 311-312; sequence RY.

This sequence belongs to the MnmA/TRMU family. As to quaternary structure, interacts with TusE.

Its subcellular location is the cytoplasm. The catalysed reaction is S-sulfanyl-L-cysteinyl-[protein] + uridine(34) in tRNA + AH2 + ATP = 2-thiouridine(34) in tRNA + L-cysteinyl-[protein] + A + AMP + diphosphate + H(+). Its function is as follows. Catalyzes the 2-thiolation of uridine at the wobble position (U34) of tRNA(Lys), tRNA(Glu) and tRNA(Gln), leading to the formation of s(2)U34, the first step of tRNA-mnm(5)s(2)U34 synthesis. Sulfur is provided by IscS, via a sulfur-relay system. Binds ATP and its substrate tRNAs. This chain is tRNA-specific 2-thiouridylase MnmA, found in Escherichia coli (strain SMS-3-5 / SECEC).